The primary structure comprises 188 residues: RWD domain-containing protein 4 (188 aa).

At Ser-2 the chain carries N-acetylserine. The RWD domain maps to 9 to 111 (MELEALRSIY…EYAKDNKEQF (103 aa)). Residues 132 to 167 (TPNTAPSSKKKDKKEQLSKAQKRKLADKTDHKGELP) are disordered. A compositionally biased stretch (basic and acidic residues) spans 155 to 166 (KLADKTDHKGEL).

In Homo sapiens (Human), this protein is RWD domain-containing protein 4 (RWDD4).